A 105-amino-acid chain; its full sequence is Large ribosomal subunit protein eL36 (105 aa).

An N6-acetyllysine modification is found at Lys62.

It belongs to the eukaryotic ribosomal protein eL36 family. As to quaternary structure, component of the large ribosomal subunit.

Its subcellular location is the cytoplasm. The protein localises to the cytosol. Functionally, component of the large ribosomal subunit. The ribosome is a large ribonucleoprotein complex responsible for the synthesis of proteins in the cell. The sequence is that of Large ribosomal subunit protein eL36 (Rpl36) from Rattus norvegicus (Rat).